We begin with the raw amino-acid sequence, 326 residues long: Target of rapamycin complex subunit LST8 (326 aa).

N-acetylmethionine is present on methionine 1. WD repeat units lie at residues 1–37 (MNTT…CTRT), 40–80 (HQDS…PIIS), 83–122 (GVSK…LQCQ), 126–165 (QVNA…NEQL), and 168–207 (EPES…GDDV). Position 51 is a phosphothreonine (threonine 51). Lysine 86 participates in a covalent cross-link: Glycyl lysine isopeptide (Lys-Gly) (interchain with G-Cter in SUMO3). Glycyl lysine isopeptide (Lys-Gly) (interchain with G-Cter in SUMO3) cross-links involve residues lysine 215, lysine 245, and lysine 261. A WD 6 repeat occupies 218–257 (AHTRYALQCRFSPDSTLLATCSADQTCKIWRTSNFSLMTE). The stretch at 268–309 (SSRGWMWGCAFSGDSQYIVTASSDNLARLWCVETGEIKREYG) is one WD 7 repeat. A Glycyl lysine isopeptide (Lys-Gly) (interchain with G-Cter in SUMO3); alternate cross-link involves residue lysine 305. Glycyl lysine isopeptide (Lys-Gly) (interchain with G-Cter in ubiquitin); alternate cross-links involve residues lysine 305 and lysine 313. A Glycyl lysine isopeptide (Lys-Gly) (interchain with G-Cter in SUMO1); alternate cross-link involves residue lysine 313.

The protein belongs to the WD repeat LST8 family. Part of the mechanistic target of rapamycin complex 1 (mTORC1) which contains MTOR, MLST8 and RPTOR. mTORC1 associates with AKT1S1/PRAS40, which inhibits its activity. mTORC1 binds to and is inhibited by FKBP12-rapamycin. Within mTORC1, interacts directly with MTOR and RPTOR. Component of the mechanistic target of rapamycin complex 2 (mTORC2), consisting in two heterotretramers composed of MTOR, MLST8, RICTOR and MAPKAP1/SIN1. Contrary to mTORC1, mTORC2 does not bind to and is not sensitive to FKBP12-rapamycin. mTORC1 and mTORC2 associate with DEPTOR, which regulates their activity. Interacts with RHEB. Interacts with MEAK7. Interacts with SIK3. Interacts with SLC38A7; this interaction promotes the recruitment of mTORC1 to the lysosome and its subsequent activation. In terms of processing, phosphorylation at Thr-51 by CDK1 promotes ubiquitination by the SCF(FBXW7) complex, followed by degradation. Post-translationally, ubiquitination by the SCF(FBXW7) and SCF(FBXW11) complexes following phosphorylation at Thr-51 by CDK1, leads to its degradation by the proteasome. Ubiquitination at Lys-305 and Lys-313 by TRAF2 via 'Lys-63'-linked polyubiquitin chains inhibits formation of the mTORC2 complex, while promoting formation of the mTORC1 complex: ubiquitination disrupts the interaction between MLST8 and MAPKAP1/SIN1 to favor mTORC1 assembly. Deubiquitination at Lys-305 and Lys-313 by OTUD7B promotes MLST8 interaction with MAPKAP1/SIN1, facilitating mTORC2 assembly. Sumoylation with SUMO1, SUMO2 and SUMO3 promotes assembly of both mTORC1 and mTORC2 complexes.

Its subcellular location is the lysosome membrane. The protein localises to the cytoplasm. In terms of biological role, subunit of both mTORC1 and mTORC2, which regulates cell growth and survival in response to nutrient and hormonal signals. mTORC1 is activated in response to growth factors or amino acids. In response to nutrients, mTORC1 is recruited to the lysosome membrane and promotes protein, lipid and nucleotide synthesis by phosphorylating several substrates, such as ribosomal protein S6 kinase (RPS6KB1 and RPS6KB2) and EIF4EBP1 (4E-BP1). In the same time, it inhibits catabolic pathways by phosphorylating the autophagy initiation components ULK1 and ATG13, as well as transcription factor TFEB, a master regulators of lysosomal biogenesis and autophagy. The mTORC1 complex is inhibited in response to starvation and amino acid depletion. Within mTORC1, MLST8 interacts directly with MTOR and enhances its kinase activity. In nutrient-poor conditions, stabilizes the MTOR-RPTOR interaction and favors RPTOR-mediated inhibition of MTOR activity. As part of the mTORC2 complex, transduces signals from growth factors to pathways involved in proliferation, cytoskeletal organization, lipogenesis and anabolic output. mTORC2 is also activated by growth factors, but seems to be nutrient-insensitive. In response to growth factors, mTORC2 phosphorylates and activates AGC protein kinase family members, including AKT (AKT1, AKT2 and AKT3), PKC (PRKCA, PRKCB and PRKCE) and SGK1. mTORC2 functions upstream of Rho GTPases to regulate the actin cytoskeleton, probably by activating one or more Rho-type guanine nucleotide exchange factors. mTORC2 promotes the serum-induced formation of stress-fibers or F-actin. mTORC2 plays a critical role in AKT1 activation by mediating phosphorylation of different sites depending on the context, such as 'Thr-450', 'Ser-473', 'Ser-477' or 'Thr-479', facilitating the phosphorylation of the activation loop of AKT1 on 'Thr-308' by PDPK1/PDK1 which is a prerequisite for full activation. mTORC2 regulates the phosphorylation of SGK1 at 'Ser-422'. mTORC2 also modulates the phosphorylation of PRKCA on 'Ser-657'. Within mTORC2, MLST8 acts as a bridge between MAPKAP1/SIN1 and MTOR. The protein is Target of rapamycin complex subunit LST8 of Mus musculus (Mouse).